Reading from the N-terminus, the 310-residue chain is Ornithine carbamoyltransferase (310 aa).

Residues 56-59 (STRT), Q83, R107, and 134-137 (HPCQ) each bind carbamoyl phosphate. Residues N165, D229, and 233 to 234 (SM) contribute to the L-ornithine site. Carbamoyl phosphate-binding positions include 269–270 (CL) and R297.

This sequence belongs to the aspartate/ornithine carbamoyltransferase superfamily. OTCase family.

It is found in the cytoplasm. The enzyme catalyses carbamoyl phosphate + L-ornithine = L-citrulline + phosphate + H(+). It participates in amino-acid biosynthesis; L-arginine biosynthesis; L-arginine from L-ornithine and carbamoyl phosphate: step 1/3. In terms of biological role, reversibly catalyzes the transfer of the carbamoyl group from carbamoyl phosphate (CP) to the N(epsilon) atom of ornithine (ORN) to produce L-citrulline. The polypeptide is Ornithine carbamoyltransferase (Symbiobacterium thermophilum (strain DSM 24528 / JCM 14929 / IAM 14863 / T)).